The sequence spans 253 residues: MTKTEKKLRHYITKAIADYKLLDKGDKVMLCLSGGKDSFGLLKVLHGLIEDKTYDIDLHVYTLDQSQPGWDDSQLRKYLDDLGVSYEIETKNTYGVVIDKVPEGKTYCSLCSRLRRGNIYRYAKEHKMDKIILGHHRDDLIQSLLMSILYQGQIKSMPPKFVTQDGENTVIRPMVLVQERDLIEFAKEENFPIIPCNLCGSQENLKRKKVKKLIQDLALENPKVPSNILNSLSNVLPSHLMDRNLFDIDATIK.

A PP-loop motif motif is present at residues 33-38 (SGGKDS). [4Fe-4S] cluster-binding residues include Cys108, Cys111, and Cys199.

The protein belongs to the TtcA family. In terms of assembly, homodimer. Mg(2+) serves as cofactor. Requires [4Fe-4S] cluster as cofactor.

It is found in the cytoplasm. The catalysed reaction is cytidine(32) in tRNA + S-sulfanyl-L-cysteinyl-[cysteine desulfurase] + AH2 + ATP = 2-thiocytidine(32) in tRNA + L-cysteinyl-[cysteine desulfurase] + A + AMP + diphosphate + H(+). Its pathway is tRNA modification. Its function is as follows. Catalyzes the ATP-dependent 2-thiolation of cytidine in position 32 of tRNA, to form 2-thiocytidine (s(2)C32). The sulfur atoms are provided by the cysteine/cysteine desulfurase (IscS) system. The chain is tRNA-cytidine(32) 2-sulfurtransferase 2 from Francisella tularensis subsp. novicida (strain U112).